The sequence spans 171 residues: Putative charged multivesicular body protein 4B-like protein CHMP4BP1 (171 aa).

Residues 1–17 are compositionally biased toward basic and acidic residues; that stretch reads MLSKKQEFLEKKIEQRH. Disordered regions lie at residues 1–24 and 132–171; these read MLSKKQEFLEKKIEQRHGTKNKPA and EQEEPDKNLLEVSGPETVPLPNVPSIALPSKPAKKRKTTT.

This sequence belongs to the SNF7 family.

The protein is Putative charged multivesicular body protein 4B-like protein CHMP4BP1 (CHMP4BP1) of Homo sapiens (Human).